The sequence spans 1058 residues: SIT4-associating protein SAP185 (1058 aa).

A Glycyl lysine isopeptide (Lys-Gly) (interchain with G-Cter in ubiquitin) cross-link involves residue Lys20. 6 disordered regions span residues Thr34–Glu71, Ser135–Glu202, Asn513–Asp556, Cys818–Gln862, Thr873–Glu892, and Glu934–Asp992. Residues Asp42–Phe55 show a composition bias toward polar residues. 2 stretches are compositionally biased toward basic and acidic residues: residues Ser135–Lys146 and Glu153–Gly175. Positions Glu176–Ser189 are enriched in acidic residues. A compositionally biased stretch (basic and acidic residues) spans Glu190 to Glu202. Acidic residues-rich tracts occupy residues Glu528 to Asn546 and Glu820 to Pro837. The span at Gln838 to Glu861 shows a compositional bias: basic and acidic residues. Positions Glu934–Phe963 are enriched in polar residues. Positions Phe967–Tyr991 are enriched in basic and acidic residues.

It belongs to the SAPS family. Post-translationally, hyperphosphorylated in the absence of SIT4.

Functionally, associates with the SIT4 phosphatase in a cell cycle dependent manner. May be directly or indirectly involved in SIT4-dependent functions in budding and in normal G1 cyclin expression. The polypeptide is SIT4-associating protein SAP185 (SAP185) (Saccharomyces cerevisiae (strain ATCC 204508 / S288c) (Baker's yeast)).